Here is a 520-residue protein sequence, read N- to C-terminus: Ubiquitin carboxyl-terminal hydrolase MINDY-1 (520 aa).

The disordered stretch occupies residues 1 to 155 (MADSCADTVD…ENEGAVAGAM (155 aa)). Positions 26–37 (KNEDLEQTKPQK) are enriched in basic and acidic residues. Residues 43–54 (TEESSACVSQIK) show a composition bias toward polar residues. Positions 77 to 86 (ATSSASVTSK) are enriched in low complexity. 2 stretches are compositionally biased toward polar residues: residues 93–112 (VINS…SFSM) and 132–146 (SAKS…SVQE). Catalysis depends on Cys-189, which acts as the Nucleophile. His-371 functions as the Proton acceptor in the catalytic mechanism. 2 disordered regions span residues 422–441 (SQKP…QQMQ) and 467–520 (ELAR…CCIL). The tract at residues 441 to 479 (QIDQDYLVAMSLQQEQGEAPGPLSDLELARQLQQEEYQQ) is ubiquitin-binding domain (UBD). Positions 469 to 498 (ARQLQQEEYQQPQTQQQQQQQPSAGQMRGQ) are enriched in low complexity. Basic and acidic residues predominate over residues 511 to 520 (KKEETDCCIL).

It belongs to the MINDY deubiquitinase family. FAM63 subfamily.

The catalysed reaction is Thiol-dependent hydrolysis of ester, thioester, amide, peptide and isopeptide bonds formed by the C-terminal Gly of ubiquitin (a 76-residue protein attached to proteins as an intracellular targeting signal).. Functionally, hydrolase that can specifically remove 'Lys-48'-linked conjugated ubiquitin from proteins. May play a regulatory role at the level of protein turnover. The protein is Ubiquitin carboxyl-terminal hydrolase MINDY-1 (mindy1) of Danio rerio (Zebrafish).